The primary structure comprises 398 residues: Carbamoyl phosphate synthase small chain (398 aa).

The CPSase stretch occupies residues 1 to 204; sequence MSPLLPSFPP…PAYGTLDTGK (204 aa). L-glutamine contacts are provided by serine 53, glycine 256, and glycine 258. One can recognise a Glutamine amidotransferase type-1 domain in the interval 208-395; sequence KVVAYDFGVK…VELMNAASKK (188 aa). Catalysis depends on cysteine 284, which acts as the Nucleophile. Residues leucine 285, glutamine 288, asparagine 326, glycine 328, and phenylalanine 329 each contribute to the L-glutamine site. Active-site residues include histidine 368 and glutamate 370.

The protein belongs to the CarA family. Composed of two chains; the small (or glutamine) chain promotes the hydrolysis of glutamine to ammonia, which is used by the large (or ammonia) chain to synthesize carbamoyl phosphate. Tetramer of heterodimers (alpha,beta)4.

The enzyme catalyses hydrogencarbonate + L-glutamine + 2 ATP + H2O = carbamoyl phosphate + L-glutamate + 2 ADP + phosphate + 2 H(+). The catalysed reaction is L-glutamine + H2O = L-glutamate + NH4(+). It functions in the pathway amino-acid biosynthesis; L-arginine biosynthesis; carbamoyl phosphate from bicarbonate: step 1/1. It participates in pyrimidine metabolism; UMP biosynthesis via de novo pathway; (S)-dihydroorotate from bicarbonate: step 1/3. Functionally, small subunit of the glutamine-dependent carbamoyl phosphate synthetase (CPSase). CPSase catalyzes the formation of carbamoyl phosphate from the ammonia moiety of glutamine, carbonate, and phosphate donated by ATP, constituting the first step of 2 biosynthetic pathways, one leading to arginine and/or urea and the other to pyrimidine nucleotides. The small subunit (glutamine amidotransferase) binds and cleaves glutamine to supply the large subunit with the substrate ammonia. This Polynucleobacter necessarius subsp. necessarius (strain STIR1) protein is Carbamoyl phosphate synthase small chain.